The primary structure comprises 173 residues: Putative 4-hydroxy-4-methyl-2-oxoglutarate aldolase (173 aa).

Residues 89–92 and Arg111 contribute to the substrate site; that span reads GGNL. Residue Asp112 coordinates a divalent metal cation.

Belongs to the class II aldolase/RraA-like family. Homotrimer. Requires a divalent metal cation as cofactor.

The catalysed reaction is 4-hydroxy-4-methyl-2-oxoglutarate = 2 pyruvate. It carries out the reaction oxaloacetate + H(+) = pyruvate + CO2. In terms of biological role, catalyzes the aldol cleavage of 4-hydroxy-4-methyl-2-oxoglutarate (HMG) into 2 molecules of pyruvate. Also contains a secondary oxaloacetate (OAA) decarboxylase activity due to the common pyruvate enolate transition state formed following C-C bond cleavage in the retro-aldol and decarboxylation reactions. This chain is Putative 4-hydroxy-4-methyl-2-oxoglutarate aldolase, found in Albidiferax ferrireducens (strain ATCC BAA-621 / DSM 15236 / T118) (Rhodoferax ferrireducens).